Reading from the N-terminus, the 311-residue chain is tRNA dimethylallyltransferase (311 aa).

Residue 12-19 (GPTASGKT) coordinates ATP. A substrate-binding site is contributed by 14 to 19 (TASGKT). 2 interaction with substrate tRNA regions span residues 37–40 (DSAM) and 161–165 (QRIQR).

Belongs to the IPP transferase family. In terms of assembly, monomer. Requires Mg(2+) as cofactor.

It carries out the reaction adenosine(37) in tRNA + dimethylallyl diphosphate = N(6)-dimethylallyladenosine(37) in tRNA + diphosphate. In terms of biological role, catalyzes the transfer of a dimethylallyl group onto the adenine at position 37 in tRNAs that read codons beginning with uridine, leading to the formation of N6-(dimethylallyl)adenosine (i(6)A). The protein is tRNA dimethylallyltransferase of Coxiella burnetii (strain Dugway 5J108-111).